Consider the following 1267-residue polypeptide: MTHTIRVLIKYQNSMIDHFIIKGVKLSTQIDMFCQIFKIQEDPIKYSLLVEDLGVYLTDDAIFHENSTYININNKVLELQLGTSYQVSSVLKTMSSCKDLKKSLVLLKSHLTKNFCAEFIKKGGLEHLQAIIKSESASANTLSVAFGILEILSVYPDFSWDYISQPVIDKVVSNFGYINVNPSLKLGIKLATDRKGYTMLQNSIDKTFDTTTGDNCVYSKIVNGNLSSTDINTQTSTLNLINNMVSFSQSPIEFLKNLESYNISSTLKSQLSATDTAFRKQIYLFQCHKIQGLIMDSKTPYNKDEPSHQRLLETLWSTLFPNQVFQRSHENWQIIGFQNKDPSSDFRGMGLAGLKHLIYLAQNHKDMFMNPLINRQPEANYYPYATSGIQVTSFLVECVKPINISANHSDVIGQIYPILFESENALNEIYCVLMEIFGIVWKDWNATYMIFQKVFQFVSGLASEVLPKCKCVVDFKSLIIEKLENKKKEKKSEKRGSVSTRHSKQFGSNGNINSTTTTTTTTTTTTTPISTTGSGSSNSLNGNTSNNNNNNNISMSYSSNNGSTLSGLGNNHSSNNNNNNNNNNNNNNNNHILNNNHLYVNNTNSNSSGNNMISCSPSGSSISGSGSISIHNSQSMNSKTFIEDIDIDACTVSPDGNSPLHSAIMNSMTLDCITNGININLFLNTTNNQGLTPLNLACSISPYLIIDFFLQQDTDPFIPAKNGEYPFHNFCSRKWTFNEFTRGCSLFLAKSNHHQYHDIVNQTNHVTLETPLSTAIQSGNEDSVGHLLTLCPNINNYFNSSGQNALHIAISKRNLHIITCLIQNGADPSIPNEITKETCEDICASDPEIMIILNPTKLSRSTSSTSSSTSRIHDESNNNGSIKKNPIPLPKRPQITNNNSIQYSNSTSSNSLINNNNFNNLLSTSINNSYNNNNNNNNNNNNNNNNNNNNNNNNNNNNPNNNNNNNNNNNPNNNSNNNNNNNNNNNNNNNNSTLNVNNNNNSNNNHQYVNSPYNSNKSSISSPNHNNTPSTSPGITSPIFRSATPLKQTMSVGLMHSPTQESPQVISTPTSPPYLSNNNGAERVYGRSGSGFFNNINGMFNQENLTKNSGNNNNNNSSSSGGSSSSNSNGINNNNNNNINNNNNNNNNNNNNNNNNGSIGNSGNYNHMNNINIGSHHSNHHSNHNGPINNGNYPNYRGNNITTSPVGVTVTPPKDQKKADSVVNVRRLLNESLCLVDLICSGPEKQKENVKKLNEALKSCLKNVKNF.

Positions 307–466 (SHQRLLETLW…FVSGLASEVL (160 aa)) constitute an ELMO domain. The span at 486-496 (KKKEKKSEKRG) shows a compositional bias: basic and acidic residues. A disordered region spans residues 486 to 598 (KKKEKKSEKR…NNHILNNNHL (113 aa)). A compositionally biased stretch (low complexity) spans 507-598 (GSNGNINSTT…NNHILNNNHL (92 aa)). ANK repeat units lie at residues 655–685 (DGNS…FLNT), 689–718 (QGLT…DPFI), 767–796 (TLET…NINN), and 801–830 (SGQN…DPSI). Disordered stretches follow at residues 854 to 908 (NPTK…NSTS), 924 to 1040 (TSIN…SPIF), 1057 to 1082 (SPTQ…NGAE), and 1103 to 1215 (ENLT…PPKD). Composition is skewed to low complexity over residues 859-870 (SRSTSSTSSSTS), 895-908 (ITNN…NSTS), and 924-1033 (TSIN…STSP). The span at 1057–1080 (SPTQESPQVISTPTSPPYLSNNNG) shows a compositional bias: polar residues. Low complexity-rich tracts occupy residues 1108 to 1176 (NSGN…IGSH) and 1184 to 1213 (HNGP…VTPP).

This chain is Ankyrin repeat and ELMO domain-containing protein D (elmoD), found in Dictyostelium discoideum (Social amoeba).